The primary structure comprises 550 residues: Sterol O-acyltransferase 1 (550 aa).

Methionine 1 carries the post-translational modification N-acetylmethionine. A disordered region spans residues 1–36 (MVGEEKMSLRNRLSKSRENPEEDEDQRKPAKESLEA). Residues 1 to 138 (MVGEEKMSLR…LDELLEVDHI (138 aa)) lie on the Cytoplasmic side of the membrane. Serine 8 is modified (phosphoserine). Residues 15–34 (KSRENPEEDEDQRKPAKESL) are compositionally biased toward basic and acidic residues. Histidine 137 lines the cholesterol pocket. The chain crosses the membrane as a helical span at residues 139–160 (RTIYHMFIALLILFILSTLVVD). At 161–180 (YIDEGRLVLEFSLLSYAFGK) the chain is on the lumenal side. The helical transmembrane segment at 181–206 (FPTVVWTWWIMFLSTFSVPYFLFQRW) threads the bilayer. At 207–218 (ATGYSKSSHPLI) the chain is on the cytoplasmic side. A helical transmembrane segment spans residues 219 to 244 (NSLFHGFLFMVFQIGILGFGPTYVVL). The Lumenal portion of the chain corresponds to 245 to 252 (AYTLPPAS). The chain crosses the membrane as a helical span at residues 253–276 (RFIIIFEQIRFVMKAHSFVRENVP). At 277–319 (RVLNSAKEKSSTVPIPTVNQYLYFLFAPTLIYRDSYPRNPTVR) the chain is on the cytoplasmic side. The helical transmembrane segment at 320–352 (WGYVAMQFAQVFGCFFYVYYIFERLCAPLFRNI) threads the bilayer. The Lumenal portion of the chain corresponds to 353-369 (KQEPFSARVLVLCVFNS). A helical membrane pass occupies residues 370-395 (ILPGVLILFLTFFAFLHCWLNAFAEM). Over 396–443 (LRFGDRMFYKDWWNSTSYSNYYRTWNVVVHDWLYYYAYKDFLWFFSKR) the chain is Cytoplasmic. The FYXDWWN motif motif lies at 403–409 (FYKDWWN). Residues asparagine 415, arginine 418, asparagine 421, histidine 425, tyrosine 433, lysine 445, and serine 456 each contribute to the an acyl-CoA site. The helical transmembrane segment at 444-468 (FKSAAMLAAFAVSAVVHEYALAVCL) threads the bilayer. Residue histidine 460 is part of the active site. Over 469–474 (SFFYPV) the chain is Lumenal. Residues 475–490 (LFVLFMFFGMAFNFIV) traverse the membrane as a helical segment. Topologically, residues 491-496 (NDSRKK) are cytoplasmic. A helical transmembrane segment spans residues 497-528 (PIWNVMMWTSLFLGNGVLLCFYSQEWYARQHC). Cysteine 528 and cysteine 546 are joined by a disulfide. Residues 529-550 (PLKNPTFLDYVRPRSWTCRYVF) are Lumenal-facing.

Belongs to the membrane-bound acyltransferase family. Sterol o-acyltransferase subfamily. In terms of assembly, may form homo- or heterodimers. Interacts with UBIAD1. Expressed in most tissues, but most strongly in the adrenal gland. Expressed more strongly in liver Kupffer cells than in hepatocytes.

The protein localises to the endoplasmic reticulum membrane. The enzyme catalyses a sterol + a long-chain fatty acyl-CoA = a long-chain 3-hydroxysterol ester + CoA. It carries out the reaction cholesterol + an acyl-CoA = a cholesterol ester + CoA. The catalysed reaction is cholesterol + (9Z)-octadecenoyl-CoA = cholesteryl (9Z-octadecenoate) + CoA. It catalyses the reaction cholesterol + hexadecanoyl-CoA = cholesteryl hexadecanoate + CoA. The enzyme catalyses octadecanoyl-CoA + cholesterol = cholesteryl octadecanoate + CoA. It carries out the reaction (9Z,12Z)-octadecadienoyl-CoA + cholesterol = cholesteryl (9Z,12Z)-octadecadienoate + CoA. The catalysed reaction is (5Z,8Z,11Z,14Z)-eicosatetraenoyl-CoA + cholesterol = cholesteryl (5Z,8Z,11Z,14Z)-eicosatetraenoate + CoA. It catalyses the reaction (9Z)-hexadecenoyl-CoA + cholesterol = cholesteryl (9Z)-hexadecenoate + CoA. The enzyme catalyses (11Z)-octadecenoyl-CoA + cholesterol = cholesteryl (11Z)-octadecenoate + CoA. It carries out the reaction (7Z)-octadecenoyl-CoA + cholesterol = cholesteryl (7Z)-octadecenoate + CoA. Its function is as follows. Catalyzes the formation of fatty acid-cholesterol esters, which are less soluble in membranes than cholesterol. Plays a role in lipoprotein assembly and dietary cholesterol absorption. Preferentially utilizes oleoyl-CoA ((9Z)-octadecenoyl-CoA) as a substrate: shows a higher activity towards an acyl-CoA substrate with a double bond at the delta-9 position (9Z) than towards saturated acyl-CoA or an unsaturated acyl-CoA with a double bond at the delta-7 (7Z) or delta-11 (11Z) positions. This Macaca fascicularis (Crab-eating macaque) protein is Sterol O-acyltransferase 1 (SOAT1).